The sequence spans 279 residues: Acetylglutamate kinase (279 aa).

Residues 64–65 (GG), Arg-86, and Asn-177 each bind substrate.

This sequence belongs to the acetylglutamate kinase family. ArgB subfamily.

It is found in the cytoplasm. It catalyses the reaction N-acetyl-L-glutamate + ATP = N-acetyl-L-glutamyl 5-phosphate + ADP. Its pathway is amino-acid biosynthesis; L-arginine biosynthesis; N(2)-acetyl-L-ornithine from L-glutamate: step 2/4. Its function is as follows. Catalyzes the ATP-dependent phosphorylation of N-acetyl-L-glutamate. This Campylobacter jejuni (strain RM1221) protein is Acetylglutamate kinase.